Here is a 402-residue protein sequence, read N- to C-terminus: E3 ubiquitin-protein ligase MARCHF11 (402 aa).

The span at 1–11 (MSFEGGHGGSR) shows a compositional bias: gly residues. Positions 1–161 (MSFEGGHGGS…SGGGDQRAGH (161 aa)) are disordered. Residues 21-56 (EPPPQPPPPPPPTPPPGEPAPVPAAPRYLPPLPASP) are compositionally biased toward pro residues. A compositionally biased stretch (low complexity) spans 111–124 (EAAAAKGGPGESEA). Residues 162–222 (QHQHHQPICK…ELCCYRYHVI (61 aa)) form an RING-CH-type zinc finger. Positions 170, 173, 186, 188, 196, 199, 212, and 215 each coordinate Zn(2+). The next 2 membrane-spanning stretches (helical) occupy residues 245-265 (MIAV…LLWS) and 278-298 (ILFQ…IGLI). The YXXL motif motif lies at 371–374 (YVLL). A PDZ-binding motif is present at residues 399-402 (VTSV).

Interacts (YXXL motif) with AP1M1. Interacts (via PDZ-binding motif) with LIN7A. Interacts with unidentified fucose glycoproteins.

It is found in the cytoplasmic vesicle membrane. The catalysed reaction is S-ubiquitinyl-[E2 ubiquitin-conjugating enzyme]-L-cysteine + [acceptor protein]-L-lysine = [E2 ubiquitin-conjugating enzyme]-L-cysteine + N(6)-ubiquitinyl-[acceptor protein]-L-lysine.. Its pathway is protein modification; protein ubiquitination. Functionally, E3 ubiquitin-protein ligase that mediates polyubiquitination of CD4. E3 ubiquitin ligases accept ubiquitin from an E2 ubiquitin-conjugating enzyme in the form of a thioester and then directly transfer the ubiquitin to targeted substrates. May play a role in ubuquitin-dependent protein sorting in developmenting spermatids. This Homo sapiens (Human) protein is E3 ubiquitin-protein ligase MARCHF11.